The following is a 203-amino-acid chain: MIGRLRGIILEKQPPLVLLETGGVGYEVHMPMTCFYELPDAGKEAIIFTQFVVREDAQLLYGFNNKQERMLFRELIKTNGVGPKLALAILSGMSAHQFVNAVEREDPAALIKLPGIGKKTAERLIVEMKDRFKGLHGDLFTPAADLVLTSPNGPTSDDAEQEAVAALVALGYKPQEASRMVSKIAKPDANSETLIREALRAAL.

The domain I stretch occupies residues 1 to 64 (MIGRLRGIIL…EDAQLLYGFN (64 aa)). Residues 65–142 (NKQERMLFRE…KGLHGDLFTP (78 aa)) form a domain II region. The tract at residues 143–154 (AADLVLTSPNGP) is flexible linker. The interval 155–203 (TSDDAEQEAVAALVALGYKPQEASRMVSKIAKPDANSETLIREALRAAL) is domain III.

This sequence belongs to the RuvA family. Homotetramer. Forms an RuvA(8)-RuvB(12)-Holliday junction (HJ) complex. HJ DNA is sandwiched between 2 RuvA tetramers; dsDNA enters through RuvA and exits via RuvB. An RuvB hexamer assembles on each DNA strand where it exits the tetramer. Each RuvB hexamer is contacted by two RuvA subunits (via domain III) on 2 adjacent RuvB subunits; this complex drives branch migration. In the full resolvosome a probable DNA-RuvA(4)-RuvB(12)-RuvC(2) complex forms which resolves the HJ.

It localises to the cytoplasm. Its function is as follows. The RuvA-RuvB-RuvC complex processes Holliday junction (HJ) DNA during genetic recombination and DNA repair, while the RuvA-RuvB complex plays an important role in the rescue of blocked DNA replication forks via replication fork reversal (RFR). RuvA specifically binds to HJ cruciform DNA, conferring on it an open structure. The RuvB hexamer acts as an ATP-dependent pump, pulling dsDNA into and through the RuvAB complex. HJ branch migration allows RuvC to scan DNA until it finds its consensus sequence, where it cleaves and resolves the cruciform DNA. In Enterobacter sp. (strain 638), this protein is Holliday junction branch migration complex subunit RuvA.